Here is a 157-residue protein sequence, read N- to C-terminus: Phospholipase A2 phaiodactylipin (157 aa).

Ca(2+)-binding residues include W34 and G36. Cystine bridges form between C35-C56, C55-C94, C62-C87, C85-C127, and C132-C143. N43 carries N-linked (GlcNAc...) asparagine glycosylation. Residue H59 is part of the active site. D60 contributes to the Ca(2+) binding site. D88 is an active-site residue. N-linked (GlcNAc...) asparagine glycosylation is present at N101. The propeptide at 134–139 (DEKSAR) is removed in mature form. An N-linked (GlcNAc...) asparagine glycan is attached at N153.

This sequence belongs to the phospholipase A2 family. Group III subfamily. Heterodimer composed of a small subunit and a large subunit; disulfide-linked. The cofactor is Ca(2+). In terms of tissue distribution, expressed by the venom gland.

Its subcellular location is the secreted. The catalysed reaction is a 1,2-diacyl-sn-glycero-3-phosphocholine + H2O = a 1-acyl-sn-glycero-3-phosphocholine + a fatty acid + H(+). Its function is as follows. Scorpion venom phospholipase A2 (PLA2) that is lethal to crickets and crustaceae. Causes inflammation in mice and lysis of human erythrocytes. Has a mild anticoagulant effect on human platelets. PLA2 catalyzes the calcium-dependent hydrolysis of the 2-acyl groups in 3-sn-phosphoglycerides. The polypeptide is Phospholipase A2 phaiodactylipin (Anuroctonus phaiodactylus (Mafia scorpion)).